The chain runs to 278 residues: uncharacterized protein (278 aa).

This is an uncharacterized protein from Methanocaldococcus jannaschii (strain ATCC 43067 / DSM 2661 / JAL-1 / JCM 10045 / NBRC 100440) (Methanococcus jannaschii).